We begin with the raw amino-acid sequence, 198 residues long: Transcription factor FapR (198 aa).

In terms of domain architecture, MaoC-like spans 102–169 (NRIARGHHLF…RTIVEVNSYV (68 aa)).

It belongs to the FapR family.

Functionally, transcriptional factor involved in regulation of membrane lipid biosynthesis by repressing genes involved in fatty acid and phospholipid metabolism. The chain is Transcription factor FapR from Geobacillus sp. (strain WCH70).